A 434-amino-acid polypeptide reads, in one-letter code: Serine hydroxymethyltransferase 1 (434 aa).

(6S)-5,6,7,8-tetrahydrofolate-binding positions include L136 and 140–142 (GHL). K245 is subject to N6-(pyridoxal phosphate)lysine.

The protein belongs to the SHMT family. As to quaternary structure, homodimer. Pyridoxal 5'-phosphate is required as a cofactor.

It localises to the cytoplasm. It catalyses the reaction (6R)-5,10-methylene-5,6,7,8-tetrahydrofolate + glycine + H2O = (6S)-5,6,7,8-tetrahydrofolate + L-serine. It participates in one-carbon metabolism; tetrahydrofolate interconversion. It functions in the pathway amino-acid biosynthesis; glycine biosynthesis; glycine from L-serine: step 1/1. Its function is as follows. Catalyzes the reversible interconversion of serine and glycine with tetrahydrofolate (THF) serving as the one-carbon carrier. This reaction serves as the major source of one-carbon groups required for the biosynthesis of purines, thymidylate, methionine, and other important biomolecules. Also exhibits THF-independent aldolase activity toward beta-hydroxyamino acids, producing glycine and aldehydes, via a retro-aldol mechanism. The protein is Serine hydroxymethyltransferase 1 of Rhodospirillum rubrum (strain ATCC 11170 / ATH 1.1.1 / DSM 467 / LMG 4362 / NCIMB 8255 / S1).